We begin with the raw amino-acid sequence, 146 residues long: Catabolic 3-dehydroquinase (146 aa).

The Proton acceptor role is filled by Tyr24. Residues Asn78, His84, and Asp91 each coordinate substrate. The active-site Proton donor is the His104. Residues 105-106 (IT) and Arg115 contribute to the substrate site.

This sequence belongs to the type-II 3-dehydroquinase family. In terms of assembly, homododecamer. Adopts a ring-like structure, composed of an arrangement of two hexameric rings stacked on top of one another.

The enzyme catalyses 3-dehydroquinate = 3-dehydroshikimate + H2O. It functions in the pathway aromatic compound metabolism; 3,4-dihydroxybenzoate biosynthesis; 3,4-dihydroxybenzoate from 3-dehydroquinate: step 1/2. In terms of biological role, is involved in the catabolism of quinate. Allows the utilization of quinate as carbon source via the beta-ketoadipate pathway. This is Catabolic 3-dehydroquinase from Candida albicans (strain SC5314 / ATCC MYA-2876) (Yeast).